Here is a 407-residue protein sequence, read N- to C-terminus: Putative membrane protein 047R (407 aa).

A disordered region spans residues 265–337 (INCVFKPDPP…PPKPTPPPPI (73 aa)). Residues 271–337 (PDPPPQPKPQ…PPKPTPPPPI (67 aa)) are compositionally biased toward pro residues. A run of 2 helical transmembrane segments spans residues 355–372 (NWIMLTFVGLVLALVIYP) and 385–403 (NAAIAVLVGLNAFGLQSYV).

The protein belongs to the IIV-6 337L family.

The protein resides in the virion membrane. In Aedes vexans (Inland floodwater mosquito), this protein is Putative membrane protein 047R.